Reading from the N-terminus, the 469-residue chain is Probable ribonuclease FAU-1 (469 aa).

This sequence belongs to the FAU-1 family.

In terms of biological role, probable RNase involved in rRNA stability through maturation and/or degradation of precursor rRNAs. Binds to RNA in loop regions with AU-rich sequences. This chain is Probable ribonuclease FAU-1, found in Pyrococcus horikoshii (strain ATCC 700860 / DSM 12428 / JCM 9974 / NBRC 100139 / OT-3).